Reading from the N-terminus, the 391-residue chain is 3-ketoacyl-CoA thiolase (391 aa).

The active-site Acyl-thioester intermediate is Cys-95. Residues His-347 and Cys-377 each act as proton acceptor in the active site.

It belongs to the thiolase-like superfamily. Thiolase family. In terms of assembly, heterotetramer of two alpha chains (FadB) and two beta chains (FadA).

It is found in the cytoplasm. It carries out the reaction an acyl-CoA + acetyl-CoA = a 3-oxoacyl-CoA + CoA. The protein operates within lipid metabolism; fatty acid beta-oxidation. In terms of biological role, catalyzes the final step of fatty acid oxidation in which acetyl-CoA is released and the CoA ester of a fatty acid two carbons shorter is formed. The sequence is that of 3-ketoacyl-CoA thiolase from Pseudomonas aeruginosa (strain UCBPP-PA14).